Consider the following 346-residue polypeptide: Tryptophan--tRNA ligase (346 aa).

ATP-binding positions include 11-13 and 19-20; these read RPT and GH. Residues 12 to 20 carry the 'HIGH' region motif; that stretch reads PTGKLHLGH. Asp143 is a binding site for L-tryptophan. Residues 155 to 157, Leu193, and 201 to 205 each bind ATP; these read GKD and KMSKS. A 'KMSKS' region motif is present at residues 201–205; it reads KMSKS.

This sequence belongs to the class-I aminoacyl-tRNA synthetase family. As to quaternary structure, homodimer.

The protein resides in the cytoplasm. It carries out the reaction tRNA(Trp) + L-tryptophan + ATP = L-tryptophyl-tRNA(Trp) + AMP + diphosphate + H(+). Functionally, catalyzes the attachment of tryptophan to tRNA(Trp). This is Tryptophan--tRNA ligase from Chlamydia muridarum (strain MoPn / Nigg).